A 308-amino-acid polypeptide reads, in one-letter code: D-alanine--D-alanine ligase (308 aa).

Residues 105 to 302 (KAIFRSLGLA…FPDLCERILD (198 aa)) form the ATP-grasp domain. 133–188 (DLPFGLPCVVKPAGEGSSVGVHLVNEAAELGPACRDAASHAGDVIVERYVKGTEVD) contacts ATP. Mg(2+)-binding residues include aspartate 256, glutamate 269, and asparagine 271.

This sequence belongs to the D-alanine--D-alanine ligase family. Mg(2+) serves as cofactor. Requires Mn(2+) as cofactor.

It is found in the cytoplasm. It carries out the reaction 2 D-alanine + ATP = D-alanyl-D-alanine + ADP + phosphate + H(+). Its pathway is cell wall biogenesis; peptidoglycan biosynthesis. Its function is as follows. Cell wall formation. In Anaeromyxobacter sp. (strain K), this protein is D-alanine--D-alanine ligase.